The sequence spans 364 residues: DNA polymerase IV (364 aa).

A UmuC domain is found at 14–198 (IIHIDMDAFF…LPIEKFHGVG (185 aa)). 2 residues coordinate Mg(2+): Asp-18 and Asp-116. The active site involves Glu-117.

It belongs to the DNA polymerase type-Y family. As to quaternary structure, monomer. Mg(2+) is required as a cofactor.

The protein localises to the cytoplasm. It carries out the reaction DNA(n) + a 2'-deoxyribonucleoside 5'-triphosphate = DNA(n+1) + diphosphate. Functionally, poorly processive, error-prone DNA polymerase involved in untargeted mutagenesis. Copies undamaged DNA at stalled replication forks, which arise in vivo from mismatched or misaligned primer ends. These misaligned primers can be extended by PolIV. Exhibits no 3'-5' exonuclease (proofreading) activity. May be involved in translesional synthesis, in conjunction with the beta clamp from PolIII. This chain is DNA polymerase IV, found in Streptococcus pyogenes serotype M4 (strain MGAS10750).